Here is a 321-residue protein sequence, read N- to C-terminus: Solute carrier family 25 member 33 (321 aa).

3 Solcar repeats span residues 9-118 (ENTL…AKEQ), 126-213 (NSNI…LKKY), and 231-315 (TNFF…IVYL). A run of 6 helical transmembrane segments spans residues 12-32 (LLHL…TCPL), 49-65 (VYYP…AGVV), 121-141 (GVFV…AAFV), 190-210 (LTAS…YESL), 233-253 (FFGL…VAYP), and 298-318 (QIPN…LLED).

Belongs to the mitochondrial carrier (TC 2.A.29) family.

It localises to the mitochondrion inner membrane. The catalysed reaction is UTP(in) + UDP(out) = UTP(out) + UDP(in). It catalyses the reaction dUTP(out) + UTP(in) = dUTP(in) + UTP(out). It carries out the reaction 5-methyl-UTP(out) + UTP(in) = 5-methyl-UTP(in) + UTP(out). The enzyme catalyses 5-methyl-UDP(out) + UTP(in) = 5-methyl-UDP(in) + UTP(out). The catalysed reaction is UTP(in) + CTP(out) = UTP(out) + CTP(in). It catalyses the reaction CDP(out) + UTP(in) = CDP(in) + UTP(out). It carries out the reaction dCTP(out) + UTP(in) = dCTP(in) + UTP(out). The enzyme catalyses dCDP(out) + UTP(in) = dCDP(in) + UTP(out). The catalysed reaction is UTP(in) + GTP(out) = UTP(out) + GTP(in). It catalyses the reaction UTP(in) + GDP(out) = UTP(out) + GDP(in). It carries out the reaction dGTP(out) + UTP(in) = dGTP(in) + UTP(out). The enzyme catalyses dGDP(out) + UTP(in) = dGDP(in) + UTP(out). The catalysed reaction is ITP(out) + UTP(in) = ITP(in) + UTP(out). Mitochondrial transporter that imports/exports pyrimidine nucleotides into and from mitochondria. Selectively transports uridine, thymidine, guanosine, cytosine and inosine (deoxy)nucleoside di- and triphosphates by an antiport mechanism. May import (deoxy)nucleoside triphosphates in exchange for intramitochondrial (deoxy)nucleoside diphosphates, thus providing precursors necessary for de novo synthesis of mitochondrial DNA and RNA while exporting products of their catabolism. Participates in mitochondrial genome maintenance, regulation of mitochondrial membrane potential and mitochondrial respiration. Upon INS or IGF1 stimulation regulates cell growth and proliferation by controlling mitochondrial DNA replication and transcription, the ratio of mitochondria-to nuclear-encoded components of the electron transport chain resulting in control of mitochondrial ROS production. Participates in dendritic cell endocytosis and may associate with mitochondrial oxidative phosphorylation. This is Solute carrier family 25 member 33 (SLC25A33) from Bos taurus (Bovine).